We begin with the raw amino-acid sequence, 81 residues long: Conotoxin Vc6.7 (81 aa).

Positions 1 to 19 (MEKLTILLLVAAVLMSIQA) are cleaved as a signal peptide. The propeptide occupies 20 to 44 (VNQEKHQRAKMNLLSKRKPPAERWW). 3 disulfide bridges follow: C49–C63, C56–C67, and C62–C72.

It belongs to the conotoxin O2 superfamily. In terms of tissue distribution, expressed by the venom duct.

The protein resides in the secreted. Functionally, inhibits voltage-gated ion channels. This is Conotoxin Vc6.7 from Conus victoriae (Queen Victoria cone).